The primary structure comprises 275 residues: 2'-N-acetylparomamine deacetylase (275 aa).

Residues H14, D17, and H166 each contribute to the Zn(2+) site.

The protein belongs to the PIGL family. Zn(2+) is required as a cofactor.

The catalysed reaction is 2'-N-acetylparomamine + H2O = paromamine + acetate. The protein operates within antibiotic biosynthesis; butirosin biosynthesis. Its function is as follows. Deacetylase involved in the biosynthesis of butirosin by mediating deacetylation of 2'-N-acetylparomamine. The protein is 2'-N-acetylparomamine deacetylase (btrD) of Niallia circulans (Bacillus circulans).